We begin with the raw amino-acid sequence, 352 residues long: Ferredoxin--NADP reductase 2 (352 aa).

Residues Glu-36, Lys-44, Tyr-48, Ile-88, Leu-123, Asp-290, and Ser-331 each coordinate FAD.

It belongs to the ferredoxin--NADP reductase type 2 family. As to quaternary structure, homodimer. FAD serves as cofactor.

The enzyme catalyses 2 reduced [2Fe-2S]-[ferredoxin] + NADP(+) + H(+) = 2 oxidized [2Fe-2S]-[ferredoxin] + NADPH. The sequence is that of Ferredoxin--NADP reductase 2 from Exiguobacterium sibiricum (strain DSM 17290 / CCUG 55495 / CIP 109462 / JCM 13490 / 255-15).